We begin with the raw amino-acid sequence, 302 residues long: UPF0725 protein At1g23960 (302 aa).

Residue alanine 2 is modified to N-acetylalanine.

Belongs to the UPF0725 (EMB2204) family.

The protein is UPF0725 protein At1g23960 of Arabidopsis thaliana (Mouse-ear cress).